Here is a 119-residue protein sequence, read N- to C-terminus: MAPFVAIALLVLLSLSGLEAIQHAPKIQVYSRHPAENGKPNFLNCYVSGFHPSDIEVDLLKNGKKIEKVEHSDLSFSKDWSFYLLYYTEFTPNEKDEYACRVSHVTFSTPKTVKWDRNM.

Positions 1 to 20 (MAPFVAIALLVLLSLSGLEA) are cleaved as a signal peptide. The 90-residue stretch at 25 to 114 (PKIQVYSRHP…VTFSTPKTVK (90 aa)) folds into the Ig-like C1-type domain. Residues cysteine 45 and cysteine 100 are joined by a disulfide bond.

It belongs to the beta-2-microglobulin family. In terms of assembly, heterodimer of an alpha chain and a beta chain. Beta-2-microglobulin is the beta-chain of major histocompatibility complex class I molecules.

The protein resides in the secreted. In terms of biological role, component of the class I major histocompatibility complex (MHC). Involved in the presentation of peptide antigens to the immune system. The protein is Beta-2-microglobulin (B2M) of Cheracebus torquatus (Collared titi monkey).